The chain runs to 863 residues: MGYDSQVRTKKRHRITVVCTNCKKRKSKCDRTKPCGTCVRLGDVDSCVYLTDSSGQPESSPSLNDADPLRKQSTPAERISPGFIKKRRSSQTRQDEDHWQRVRELENQSSLYYLPIHEETPFFIDLIPNGFYLETKRSADNLFGLFTDRAIENRDPYLQAMVTFRSIAIKKMMDKLGSNGNNVKNGSLPKSFEALSTFDADDERHISDDVVGKGNNFRMHQTIHKSLFNKFAQYRENNAKKFSSETILAKDYLPPLKILESEVLALFEEKIYNMIPIFDMKVLRHEITIFYQNIVEKGNPISIKHYDHMVFCIILLIIKICRLSVQFSKLTPYIYPVLQEIDTSKFLALVKHYLFETKVLRKCNLLQLQCLILLRFLHWCAPEDGDGPETQYCQILMGTIISSCKEMGINWYCFSHPEKYSFKINRHTRPSYDIMKPSDYISVFRKIWSYVLFWDRKMCFISGEECQIGKTLQCHFKEEADTPTWYIRMLTLDNLMKKINDTLNDDPGKVDLNLLHRLINDLKRNFHILKSLSKNEKETMRHFDFEMEWIIDLFSLSLLHGEMIFYEYDCNITKFYKSFQDLWDMVIHISEKCYNYFFNSDALEVDSLTKFYTNRIVEIVANKVLVIVPAFILRGDRFKTIQYADKKKMIEFLYGVSSVYFNEFGFEYYRCFRKMFTAKIAYKILNRSCEKDAWRIILKFLLNELKLEDNGDSYIDYNDMRLNDICPIILEFQETVQKYDGYRPDILSIWNNEFYPIGKYNDDMTGFKFQMRIKEMQEFLDMEKYSDRFNIFSSFYDHASSQLAKHTEVDTNISITNEQVAEIPQKELLQQPLAPALPVNDLIVSEFDVIEDIFDPVDFVSFF.

Positions 18 to 47 (VCTNCKKRKSKCDRTKPCGTCVRLGDVDSC) form a DNA-binding region, zn(2)-C6 fungal-type. Positions 52-63 (DSSGQPESSPSL) are enriched in polar residues. The segment at 52-99 (DSSGQPESSPSLNDADPLRKQSTPAERISPGFIKKRRSSQTRQDEDHW) is disordered.

Belongs to the OAF3 family.

The protein resides in the cytoplasm. It localises to the nucleus. Its subcellular location is the mitochondrion. In terms of biological role, transcriptional inhibitor with a significantly increased number of target genes in response to oleate. In Saccharomyces cerevisiae (strain ATCC 204508 / S288c) (Baker's yeast), this protein is Oleate activated transcription factor 3 (OAF3).